A 554-amino-acid chain; its full sequence is L-ascorbate oxidase homolog (554 aa).

The signal sequence occupies residues 1–21 (MGSGKVTFVALLLCLSVGVIA). 2 consecutive Plastocyanin-like domains span residues 22-143 (EDPY…LNVH) and 196-296 (SAKV…AIIR). N-linked (GlcNAc...) asparagine glycans are attached at residues Asn-31, Asn-59, and Asn-108. Cys-101 and Cys-540 form a disulfide bridge. 3 N-linked (GlcNAc...) asparagine glycosylation sites follow: Asn-332, Asn-352, and Asn-423. One can recognise a Plastocyanin-like 3 domain in the interval 411–521 (DPSKLTIATN…LGEQLYFSVL (111 aa)).

It belongs to the multicopper oxidase family. Pollen.

It is found in the secreted. The protein localises to the extracellular space. Probable oxidoreductase that may be involved in pollen tube growth. The protein is L-ascorbate oxidase homolog of Nicotiana tabacum (Common tobacco).